Here is a 422-residue protein sequence, read N- to C-terminus: NADH-quinone oxidoreductase subunit F (422 aa).

Positions 1-26 (MLKEEDKIFTNLHGQQSHDLKSSKKR) are disordered. Positions 16–26 (QSHDLKSSKKR) are enriched in basic and acidic residues. 54-63 (GRGGAGFSTG) provides a ligand contact to NAD(+). 166-213 (GAGAYICGEETALLESLEGKKGMPRLKPPFPAGFGLYGCPTTINNVES) serves as a coordination point for FMN. [4Fe-4S] cluster is bound by residues cysteine 344, cysteine 347, cysteine 350, and cysteine 390.

Belongs to the complex I 51 kDa subunit family. It depends on FMN as a cofactor. [4Fe-4S] cluster serves as cofactor.

The enzyme catalyses a quinone + NADH + 5 H(+)(in) = a quinol + NAD(+) + 4 H(+)(out). Functionally, NDH-1 shuttles electrons from NADH, via FMN and iron-sulfur (Fe-S) centers, to quinones in the respiratory chain. Couples the redox reaction to proton translocation (for every two electrons transferred, four hydrogen ions are translocated across the cytoplasmic membrane), and thus conserves the redox energy in a proton gradient. In Rickettsia felis (strain ATCC VR-1525 / URRWXCal2) (Rickettsia azadi), this protein is NADH-quinone oxidoreductase subunit F (nuoF).